The following is a 329-amino-acid chain: Glyceraldehyde-3-phosphate dehydrogenase 1 (329 aa).

NAD(+)-binding positions include 11–12, Asp33, and Lys78; that span reads RI. D-glyceraldehyde 3-phosphate-binding positions include 148-150, Thr179, 208-209, and Arg231; these read SCT and TG. Catalysis depends on Cys149, which acts as the Nucleophile. An NAD(+)-binding site is contributed by Asn313.

Belongs to the glyceraldehyde-3-phosphate dehydrogenase family. Homotetramer.

It is found in the cytoplasm. The catalysed reaction is D-glyceraldehyde 3-phosphate + phosphate + NAD(+) = (2R)-3-phospho-glyceroyl phosphate + NADH + H(+). It participates in carbohydrate degradation; glycolysis; pyruvate from D-glyceraldehyde 3-phosphate: step 1/5. This chain is Glyceraldehyde-3-phosphate dehydrogenase 1 (GAP1), found in Kluyveromyces lactis (strain ATCC 8585 / CBS 2359 / DSM 70799 / NBRC 1267 / NRRL Y-1140 / WM37) (Yeast).